We begin with the raw amino-acid sequence, 701 residues long: MLRLEEIDLDTIKKELDEERKKVEEIMKGNIPTEIKDLIKMVLFIVESPNKARTIANFFGKPSVRRIGNIKAYETTTGKYILTIVATKGHLFELTLKEEGVYGVLKEKEYVPIFSPIKKCLDCGHQFVDEDKCPRCGSENIDDASDRIKVLRDLAQEADIVLIGTDPDAEGEKIAYDVYSIIRPYNKNIYRAEFHEVTRQAIIKALEEIRDINTNRVKAQLVRRIEDRWIGFALSQRLWSRFKKKTLSAGRVQTPVLGFIIKRYEEYKKNRAHYYAVKTSDFEVTFISDDPLEKYDKTIKIEKIEEKESEKKPLPPYTTDSLLRDAVIELRLSVDKIMALAQNLFEWGLITYHRTDSTHISNLGIQIAQTYIENTFGKEYFYPRHWGEEGTHEAIRPTKPIDTETLIKMLREGDIQIQGITKEHIRLYDLIFRRFIASQMKPFIAIETKFNAVWSNLNTTIEGITDIKENGWNLIKPIKLLAIKEGEYEVIDVKHWIGSKVPLYTQADVIELMKEQNIGRPSTYATIVKKLFERYYVIEKNQRLIPTERGIKVYQYLTERFGHLVDVKLTADLLEKMDRIENGELDYMDVLRSFKKELIEIWKTKETKYIADGIYKWKEYSVPAIVYERYEKILKRKKVYPEYLTPWSRAIYNALPLDNEIEKQTLALAIEKDFEILTKKPILREYKKKYEHLKNLVDQLL.

The Toprim domain occupies 41-197; it reads MVLFIVESPN…NIYRAEFHEV (157 aa). Glutamate 47 serves as a coordination point for Mg(2+). An RG C-terminal-type zinc finger spans residues 117–143; the sequence is IKKCLDCGHQFVDEDKCPRCGSENIDD. The Zn(2+) site is built by cysteine 120, cysteine 123, cysteine 133, and cysteine 136. Aspartate 166 lines the Mg(2+) pocket. Residues 213–602 enclose the Topo IA-type catalytic domain; sequence NTNRVKAQLV…SFKKELIEIW (390 aa). Tyrosine 352 functions as the O-(5'-phospho-DNA)-tyrosine intermediate in the catalytic mechanism.

The protein belongs to the type IA topoisomerase family. In terms of assembly, heterodimer of an RgyA and RgyB subunit. Zn(2+) serves as cofactor. The cofactor is Mg(2+).

It is found in the cytoplasm. Modifies the topological state of DNA by introducing positive supercoils in an ATP-dependent process. Binds to single-stranded DNA, transiently cleaves and then rejoins the end, introducing a positive supercoil in the process. The scissile phosphodiester is attacked by the catalytic tyrosine of the enzyme, resulting in the formation of a DNA-(5'-phosphotyrosyl)-enzyme intermediate. Probably involved in rewinding DNA strands in regions of the chromosome that have opened up to allow replication, transcription, DNA repair or for DNA protection. Reconstituted holoenzyme binds dsDNA a bit better than ssDNA, this subunit preferentially binds ssDNA. In isolation this subunit relaxes negatively-supercoiled DNA, and stimulates the endogenous ATPase activity of the RgyB subunit. The sequence is that of Reverse gyrase subunit A from Nanoarchaeum equitans (strain Kin4-M).